Reading from the N-terminus, the 432-residue chain is D-amino acid dehydrogenase (432 aa).

Residue Val-3–Trp-17 participates in FAD binding.

The protein belongs to the DadA oxidoreductase family. The cofactor is FAD.

The enzyme catalyses a D-alpha-amino acid + A + H2O = a 2-oxocarboxylate + AH2 + NH4(+). It functions in the pathway amino-acid degradation; D-alanine degradation; NH(3) and pyruvate from D-alanine: step 1/1. In terms of biological role, oxidative deamination of D-amino acids. This Escherichia coli O45:K1 (strain S88 / ExPEC) protein is D-amino acid dehydrogenase.